The sequence spans 453 residues: Kynureninase (453 aa).

Residues Leu-111, Thr-112, 139 to 142 (FPSD), Ser-196, Asp-226, His-229, and Tyr-251 each bind pyridoxal 5'-phosphate. Position 252 is an N6-(pyridoxal phosphate)lysine (Lys-252). Residues Trp-286 and Asn-314 each contribute to the pyridoxal 5'-phosphate site.

Belongs to the kynureninase family. In terms of assembly, homodimer. Pyridoxal 5'-phosphate serves as cofactor.

It localises to the cytoplasm. Its subcellular location is the nucleus. The catalysed reaction is L-kynurenine + H2O = anthranilate + L-alanine + H(+). It carries out the reaction 3-hydroxy-L-kynurenine + H2O = 3-hydroxyanthranilate + L-alanine + H(+). It functions in the pathway amino-acid degradation; L-kynurenine degradation; L-alanine and anthranilate from L-kynurenine: step 1/1. It participates in cofactor biosynthesis; NAD(+) biosynthesis; quinolinate from L-kynurenine: step 2/3. Its function is as follows. Catalyzes the cleavage of L-kynurenine (L-Kyn) and L-3-hydroxykynurenine (L-3OHKyn) into anthranilic acid (AA) and 3-hydroxyanthranilic acid (3-OHAA), respectively. The polypeptide is Kynureninase (Saccharomyces cerevisiae (strain ATCC 204508 / S288c) (Baker's yeast)).